The following is a 115-amino-acid chain: Hydrogenase maturation factor HypA (115 aa).

His-2 contributes to the Ni(2+) binding site. Zn(2+) is bound by residues Cys-74, Cys-77, Cys-90, and Cys-93.

It belongs to the HypA/HybF family.

Its function is as follows. Involved in the maturation of [NiFe] hydrogenases. Required for nickel insertion into the metal center of the hydrogenase. In Desulfosudis oleivorans (strain DSM 6200 / JCM 39069 / Hxd3) (Desulfococcus oleovorans), this protein is Hydrogenase maturation factor HypA.